A 251-amino-acid chain; its full sequence is Type III pantothenate kinase (251 aa).

An ATP-binding site is contributed by 6–13; the sequence is DCGNSFIK. Residues Tyr93 and 100–103 contribute to the substrate site; that span reads GLDR. Residue Asp102 is the Proton acceptor of the active site. A K(+)-binding site is contributed by Asp122. Thr125 contacts ATP. Thr182 is a binding site for substrate.

This sequence belongs to the type III pantothenate kinase family. Homodimer. NH4(+) is required as a cofactor. It depends on K(+) as a cofactor.

It localises to the cytoplasm. The catalysed reaction is (R)-pantothenate + ATP = (R)-4'-phosphopantothenate + ADP + H(+). Its pathway is cofactor biosynthesis; coenzyme A biosynthesis; CoA from (R)-pantothenate: step 1/5. Its function is as follows. Catalyzes the phosphorylation of pantothenate (Pan), the first step in CoA biosynthesis. In Azotobacter vinelandii (strain DJ / ATCC BAA-1303), this protein is Type III pantothenate kinase.